Consider the following 469-residue polypeptide: 6-phospho-beta-galactosidase (469 aa).

5 residues coordinate D-galactose 6-phosphate: Q19, H116, N159, E160, and N297. E160 serves as the catalytic Proton donor. The Nucleophile role is filled by E375. D-galactose 6-phosphate-binding residues include S428, W429, K435, and Y437.

Belongs to the glycosyl hydrolase 1 family.

It carries out the reaction a 6-phospho-beta-D-galactoside + H2O = D-galactose 6-phosphate + an alcohol. Its pathway is carbohydrate metabolism; lactose degradation; D-galactose 6-phosphate and beta-D-glucose from lactose 6-phosphate: step 1/1. This Streptococcus equi subsp. zooepidemicus (strain H70) protein is 6-phospho-beta-galactosidase.